A 1135-amino-acid chain; its full sequence is Ubiquitin carboxyl-terminal hydrolase 7 (1135 aa).

In terms of domain architecture, MATH spans 31 to 172 (EGHLSLDIDC…NDTIKLRCRF (142 aa)). Residues 193–503 (IGLRNQGATC…SAYMLVYVRD (311 aa)) form the USP domain. Catalysis depends on C202, which acts as the Nucleophile. H442 serves as the catalytic Proton acceptor.

This sequence belongs to the peptidase C19 family.

Its subcellular location is the nucleus. It catalyses the reaction Thiol-dependent hydrolysis of ester, thioester, amide, peptide and isopeptide bonds formed by the C-terminal Gly of ubiquitin (a 76-residue protein attached to proteins as an intracellular targeting signal).. In terms of biological role, hydrolase that deubiquitinates target proteins. May play a role in regulating the levels of endogenous siRNA biogenesis. This Caenorhabditis elegans protein is Ubiquitin carboxyl-terminal hydrolase 7.